Consider the following 141-residue polypeptide: MAKEIVGYLKLQVKGGEAKPAPPVGPALGSKGLNIMEFCKQFNARTQDKQGQILPVLITIYQDKTFDFVIKTPPAAASIMQKAGISKGSSESNRNKVGVITWSAIKEIAASKMEDLNTINLESATKMIAGTARSMGVTIKE.

The protein belongs to the universal ribosomal protein uL11 family. In terms of assembly, part of the ribosomal stalk of the 50S ribosomal subunit. Interacts with L10 and the large rRNA to form the base of the stalk. L10 forms an elongated spine to which L12 dimers bind in a sequential fashion forming a multimeric L10(L12)X complex. One or more lysine residues are methylated.

Functionally, forms part of the ribosomal stalk which helps the ribosome interact with GTP-bound translation factors. The chain is Large ribosomal subunit protein uL11 from Amoebophilus asiaticus (strain 5a2).